The primary structure comprises 800 residues: Internalin A (800 aa).

Positions 1–35 are cleaved as a signal peptide; it reads MRKKRYVWLKSILVAILVFGSGVWINTSNGTNAQA. The LRRNT domain occupies 36–76; it reads ATITQDTPINQIFTDAALAEKMKTVLGKTNVTDTVSQTDLD. LRR repeat units follow at residues 77–98, 99–120, 121–142, 143–164, 165–186, 187–207, 208–229, 230–251, 252–273, 274–295, 296–317, 318–339, 340–361, 362–383, and 384–405; these read QVTTLQADRLGIKSIDGLEYLN, NLTQINFSNNQLTDITPLKDLT, KLVDILMNNNQIADITPLANLT, NLTGLTLFNNQITDIDPLKNLT, NLNRLELSSNTISDISALSGLT, NLQQLSFGNQVTDLKPLANLT, TLERLDISSNKVSDISVLAKLT, NLESLIATNNQISDITPLGILT, NLDELSLNGNQLKDIGTLASLT, NLTDLDLANNQISNLAPLSGLT, KLTELKLGANQISNISPLAGLT, ALTNLELNENQLEDISPISNLK, NLTYLTLYFNNISDISPVSSLT, KLQRLFFYNNKVSDVSSLANLT, and NINWLSAGHNQISDLTPLANLT. The 90-residue stretch at 416–505 folds into the LRRCT domain; that stretch reads AWTNAPVNYK…AIFNAKFHVD (90 aa). One copy of the B-1 repeat lies at 518–587; that stretch reads LLTEPAKPVK…TTSQTVDYQG (70 aa). The segment at 518 to 706 is 3 X approximate tandem repeats, type B; it reads LLTEPAKPVK…ITLYAQFTKN (189 aa). Residues 588–657 form a B-2 repeat; sequence LLQEPTPPTK…STTQAVDYQG (70 aa). The stretch at 658-706 is one B-3 repeat; the sequence is LLKEPKAPTKAGYTFKGWYDEKTDGKKWDFATDKMPANDITLYAQFTKN. Residues 705–757 are disordered; sequence KNPVAPPTTGGNTPPTTNNGGNTTPPSANIPGSDTSNTSTGNSASTTSTMNAY. The segment covering 711-753 has biased composition (low complexity); the sequence is PTTGGNTPPTTNNGGNTTPPSANIPGSDTSNTSTGNSASTTST. Residues 767 to 771 carry the LPXTG sorting signal motif; that stretch reads LPTTG. Threonine 770 is subject to Pentaglycyl murein peptidoglycan amidated threonine. The propeptide at 771-800 is removed by sortase A; that stretch reads GDSDNALYLLLGLLAVGTAMALTKKARASK.

Belongs to the internalin family.

The protein localises to the secreted. The protein resides in the cell wall. Its function is as follows. Mediates the entry of Listeria monocytogenes into cells. Binds to host receptor cadherin-1 (E-cadherin, CDH1). The chain is Internalin A (inlA) from Listeria monocytogenes serotype 1/2a (strain 10403S).